Reading from the N-terminus, the 326-residue chain is Ig gamma-1 chain C region (326 aa).

A CH1 region spans residues 1-97; sequence AETTAPSVYP…ASSTKVDKKI (97 aa). Cysteine 27 and cysteine 82 form a disulfide bridge. The tract at residues 98–112 is hinge; it reads VPRNCGGDCKPCICT. The interval 113–219 is CH2; it reads GSEVSSVFIF…PIEKTISKPE (107 aa). 2 disulfides stabilise this stretch: cysteine 140/cysteine 200 and cysteine 246/cysteine 304. Asparagine 176 carries an N-linked (GlcNAc...) asparagine glycan. A CH3 region spans residues 220 to 326; sequence GRTQVPHVYT…EKSLSHSPGK (107 aa).

This chain is Ig gamma-1 chain C region, found in Rattus norvegicus (Rat).